Reading from the N-terminus, the 349-residue chain is Kelch domain-containing protein 9 (349 aa).

Kelch repeat units follow at residues R39–G89, W91–C137, and Q325–I349.

As to quaternary structure, interacts with CCNA1.

This chain is Kelch domain-containing protein 9 (KLHDC9), found in Homo sapiens (Human).